Here is a 973-residue protein sequence, read N- to C-terminus: Vacuolar membrane protease (973 aa).

The Cytoplasmic portion of the chain corresponds to 1 to 15 (MARQYSRTNPLGFTP). Residues 16 to 36 (WPVTIITALVYLALVIPLLVV) form a helical membrane-spanning segment. Residues 37-383 (QHVVPSAPGS…STLAVFELHT (347 aa)) are Vacuolar-facing. 2 N-linked (GlcNAc...) asparagine glycosylation sites follow: N52 and N115. Positions 167 and 179 each coordinate Zn(2+). Catalysis depends on E213, which acts as the Proton acceptor. The Zn(2+) site is built by E214, E239, and H312. A helical transmembrane segment spans residues 384–404 (LFALSVTLLIVAPLVLLATSI). The Cytoplasmic segment spans residues 405-438 (ALVRADRMYLFRSTARVPGSDDFDEGVSLQGVRG). The helical transmembrane segment at 439–459 (FFRFPFLLVIPTGVAVGLAYL) threads the bilayer. The Vacuolar segment spans residues 460 to 469 (VTKINPYIIH). The chain crosses the membrane as a helical span at residues 470-490 (SSEYAVWSMMISAWVFLAWFV). Residues 491-504 (SRVADFARPSAFHR) lie on the Cytoplasmic side of the membrane. Residues 505-525 (VYVLTWMFVAEWVLLVIATVY) traverse the membrane as a helical segment. Topologically, residues 526–529 (ENRY) are vacuolar. Residues 530-550 (GLAGGYFVFFALSGTFLATWI) traverse the membrane as a helical segment. Over 551–674 (SYLELFALPR…GLPKWTWVLQ (124 aa)) the chain is Cytoplasmic. The disordered stretch occupies residues 572–623 (SRYASNHGSRLGTSSGEHGMDDAEDEEDDDGDDEDEARNVEEEPTESTSLLR). Residues 574–587 (YASNHGSRLGTSSG) show a composition bias toward polar residues. Residues 593 to 607 (DAEDEEDDDGDDEDE) are compositionally biased toward acidic residues. The helical transmembrane segment at 675-695 (FLLSAPIVLILVGPLALLLTA) threads the bilayer. Topologically, residues 696 to 708 (ALRQTAQDGSSPL) are vacuolar. Residues 709-729 (FVYIAIAVLTTLLVTPLLPFI) form a helical membrane-spanning segment. The Cytoplasmic segment spans residues 730–735 (HRYTHH). Residues 736–756 (IPLFLLLVFTGTLIYNLVAFP) form a helical membrane-spanning segment. Residues 757–973 (FSPSNRLKLF…LVEGSRRFEV (217 aa)) are Vacuolar-facing. N803 and N839 each carry an N-linked (GlcNAc...) asparagine glycan.

The protein belongs to the peptidase M28 family. Zn(2+) is required as a cofactor.

It is found in the vacuole membrane. Its function is as follows. May be involved in vacuolar sorting and osmoregulation. This Aspergillus clavatus (strain ATCC 1007 / CBS 513.65 / DSM 816 / NCTC 3887 / NRRL 1 / QM 1276 / 107) protein is Vacuolar membrane protease.